Consider the following 283-residue polypeptide: Polyamine aminopropyltransferase (283 aa).

In terms of domain architecture, PABS spans 2 to 238 (ELWYTEEWTE…GHWLFGFASK (237 aa)). Residue Gln-31 coordinates S-methyl-5'-thioadenosine. Spermidine is bound by residues His-62 and Asp-86. S-methyl-5'-thioadenosine contacts are provided by residues Glu-106 and 137–138 (DG). Asp-156 (proton acceptor) is an active-site residue. 156 to 159 (DSTD) contacts spermidine. Pro-163 is a binding site for S-methyl-5'-thioadenosine.

Belongs to the spermidine/spermine synthase family. In terms of assembly, homodimer or homotetramer.

The protein localises to the cytoplasm. The catalysed reaction is S-adenosyl 3-(methylsulfanyl)propylamine + putrescine = S-methyl-5'-thioadenosine + spermidine + H(+). It functions in the pathway amine and polyamine biosynthesis; spermidine biosynthesis; spermidine from putrescine: step 1/1. Functionally, catalyzes the irreversible transfer of a propylamine group from the amino donor S-adenosylmethioninamine (decarboxy-AdoMet) to putrescine (1,4-diaminobutane) to yield spermidine. The protein is Polyamine aminopropyltransferase of Clostridioides difficile (strain 630) (Peptoclostridium difficile).